A 253-amino-acid chain; its full sequence is 3-deoxy-manno-octulosonate cytidylyltransferase (253 aa).

Belongs to the KdsB family.

Its subcellular location is the cytoplasm. It carries out the reaction 3-deoxy-alpha-D-manno-oct-2-ulosonate + CTP = CMP-3-deoxy-beta-D-manno-octulosonate + diphosphate. It participates in nucleotide-sugar biosynthesis; CMP-3-deoxy-D-manno-octulosonate biosynthesis; CMP-3-deoxy-D-manno-octulosonate from 3-deoxy-D-manno-octulosonate and CTP: step 1/1. It functions in the pathway bacterial outer membrane biogenesis; lipopolysaccharide biosynthesis. Its function is as follows. Activates KDO (a required 8-carbon sugar) for incorporation into bacterial lipopolysaccharide in Gram-negative bacteria. In Haemophilus ducreyi (strain 35000HP / ATCC 700724), this protein is 3-deoxy-manno-octulosonate cytidylyltransferase.